The following is a 354-amino-acid chain: Long form salivary protein D7L3 (354 aa).

A signal peptide spans 1-26 (MQLTPRSVHLVHLLLAATTLISPSWS).

The protein belongs to the PBP/GOBP family.

The protein localises to the secreted. Its function is as follows. Modulates blood feeding of female mosquitoes on vertebrate species by binding and sequestering different mediators involved in the host response. Binds serotonin with high affinity. Binds weakly noradrenaline and histamine. Does not bind tryptamine, octopamine, dopamine, adrenaline, leukotriene C4, leukotriene D4, leukotriene B4, ADP and U-46619, a stable analog of thromboxane A2. Inhibits agonist-induced platelet aggregation. Exhibits vasodilating activity. This Anopheles gambiae (African malaria mosquito) protein is Long form salivary protein D7L3.